Here is a 338-residue protein sequence, read N- to C-terminus: Ketol-acid reductoisomerase (NADP(+)) (338 aa).

The KARI N-terminal Rossmann domain maps to 1 to 181 (MQVYYDKDAD…GGGRAGVIET (181 aa)). NADP(+) is bound by residues 24-27 (YGSQ), R47, S50, S52, and 82-85 (DEHQ). The active site involves H107. Position 133 (G133) interacts with NADP(+). Residues 182-327 (SFREETETDL…ERLRGMMPWI (146 aa)) form the KARI C-terminal knotted domain. Mg(2+) contacts are provided by D190, E194, E226, and E230. Position 251 (S251) interacts with substrate.

Belongs to the ketol-acid reductoisomerase family. Mg(2+) serves as cofactor.

The enzyme catalyses (2R)-2,3-dihydroxy-3-methylbutanoate + NADP(+) = (2S)-2-acetolactate + NADPH + H(+). It catalyses the reaction (2R,3R)-2,3-dihydroxy-3-methylpentanoate + NADP(+) = (S)-2-ethyl-2-hydroxy-3-oxobutanoate + NADPH + H(+). It participates in amino-acid biosynthesis; L-isoleucine biosynthesis; L-isoleucine from 2-oxobutanoate: step 2/4. The protein operates within amino-acid biosynthesis; L-valine biosynthesis; L-valine from pyruvate: step 2/4. Functionally, involved in the biosynthesis of branched-chain amino acids (BCAA). Catalyzes an alkyl-migration followed by a ketol-acid reduction of (S)-2-acetolactate (S2AL) to yield (R)-2,3-dihydroxy-isovalerate. In the isomerase reaction, S2AL is rearranged via a Mg-dependent methyl migration to produce 3-hydroxy-3-methyl-2-ketobutyrate (HMKB). In the reductase reaction, this 2-ketoacid undergoes a metal-dependent reduction by NADPH to yield (R)-2,3-dihydroxy-isovalerate. This Alkalilimnicola ehrlichii (strain ATCC BAA-1101 / DSM 17681 / MLHE-1) protein is Ketol-acid reductoisomerase (NADP(+)).